The chain runs to 459 residues: MGSKSPEDHRQGPDGGSADAAVTIINPPKSAAASGLLQGMLEGQDEDGDDDDDEKTGINVKTYDGAKKKRKRNKKKSKKVAVIQQTFPPRIPLATLFDNQPYPEGQIVDHVVKDDNIKRTTTEELRHVAALNDMDDDFLKDYRKAAEVHRQVRHHAQTIAKPGVSMTRLAEEIDEGVRALTGHTGLETGDALKAGLAFPTGLCLNHVGAHWTPNAGAKEVILKHDDVLKVDFGVHVNGRIVDSAFTVAANPVYDNLLAAVKAATNTGLGEAGIDARIDHISEAIQEVMESYEVELNGKTIPVKAVRNITGHNILRYRIHGDKQVPFVKTKTDQRMEEGDIFAIETFGSTGKAHLRDDVGVYGYGRNENMSPAVLHQSSAKSLLKTIDANFGTLVFARRQLERLPGVEKYHLGMRTLVNSGLVESYAPLVDITGSYIAQFEHTVLLRPNCKEIISRGDDY.

Over residues 1 to 12 (MGSKSPEDHRQG) the composition is skewed to basic and acidic residues. Positions 1 to 79 (MGSKSPEDHR…RKRNKKKSKK (79 aa)) are disordered. A compositionally biased stretch (acidic residues) spans 43-54 (GQDEDGDDDDDE). Basic residues predominate over residues 67–79 (KKKRKRNKKKSKK). His210 is a substrate binding site. Asp231, Asp242, and His311 together coordinate a divalent metal cation. His319 is a substrate binding site. A divalent metal cation contacts are provided by Glu344 and Glu440.

It belongs to the peptidase M24A family. Methionine aminopeptidase eukaryotic type 2 subfamily. It depends on Co(2+) as a cofactor. Zn(2+) is required as a cofactor. The cofactor is Mn(2+). Fe(2+) serves as cofactor.

Its subcellular location is the cytoplasm. It carries out the reaction Release of N-terminal amino acids, preferentially methionine, from peptides and arylamides.. Cotranslationally removes the N-terminal methionine from nascent proteins. The N-terminal methionine is often cleaved when the second residue in the primary sequence is small and uncharged (Met-Ala-, Cys, Gly, Pro, Ser, Thr, or Val). The sequence is that of Methionine aminopeptidase 2-1 from Pyrenophora tritici-repentis (strain Pt-1C-BFP) (Wheat tan spot fungus).